A 366-amino-acid chain; its full sequence is MKFIINNNILIKNLQKISRLLVKNTSLPILDNVLINIKNGMLSLTGTNLEIELVAMIQLSTEHISGTATISGRKLLDICRNSLNSSNIEMQLNNNKMHIISGNSRYILTTLPYDSFPVHHDFHHISEFFIPSDILKKMIEKIQFSMAKQDVRYYLNGILLEKTDRSLYAVATDGYRLGISKFFLKENIIPFSIVIPRKGVIELYRLLNIPKQPIKVLVGKNNIRVHIEDLIFTTQLIEGQYPDYKSVLLENKNNFITLNSKLLKQSLLRAAILSHEKFCGVEIHIRNGQFKVLSDNQEEEIAEDRFNINYTGNTVKISINVYYIIEILNSITSENIFLFLNNANNSIQIEAENDASILYVVMLLKR.

It belongs to the beta sliding clamp family. As to quaternary structure, forms a ring-shaped head-to-tail homodimer around DNA which binds and tethers DNA polymerases and other proteins to the DNA. The DNA replisome complex has a single clamp-loading complex (3 tau and 1 each of delta, delta', psi and chi subunits) which binds 3 Pol III cores (1 core on the leading strand and 2 on the lagging strand) each with a beta sliding clamp dimer. Additional proteins in the replisome are other copies of gamma, psi and chi, Ssb, DNA helicase and RNA primase.

Its subcellular location is the cytoplasm. In terms of biological role, confers DNA tethering and processivity to DNA polymerases and other proteins. Acts as a clamp, forming a ring around DNA (a reaction catalyzed by the clamp-loading complex) which diffuses in an ATP-independent manner freely and bidirectionally along dsDNA. Initially characterized for its ability to contact the catalytic subunit of DNA polymerase III (Pol III), a complex, multichain enzyme responsible for most of the replicative synthesis in bacteria; Pol III exhibits 3'-5' exonuclease proofreading activity. The beta chain is required for initiation of replication as well as for processivity of DNA replication. The polypeptide is Beta sliding clamp (dnaN) (Buchnera aphidicola subsp. Acyrthosiphon pisum (strain APS) (Acyrthosiphon pisum symbiotic bacterium)).